The following is a 220-amino-acid chain: Putative vesicle-associated membrane protein 726 (220 aa).

Residues 1 to 196 lie on the Cytoplasmic side of the membrane; that stretch reads MGQQSLIYSF…LWFENMKIKL (196 aa). The Longin domain occupies 10 to 114; the sequence is FVARGTVILA…SLNKEFGSKL (105 aa). The v-SNARE coiled-coil homology domain occupies 130–190; that stretch reads KLSKVKAQVT…TKMKRKLWFE (61 aa). A helical; Anchor for type IV membrane protein transmembrane segment spans residues 197-217; that stretch reads IVFGIIVALILIIILSVCHGF. Residues 218 to 220 lie on the Vesicular side of the membrane; it reads KCT.

This sequence belongs to the synaptobrevin family. In terms of tissue distribution, expressed in flowers, leaves, stems and roots.

The protein localises to the cell membrane. It is found in the early endosome membrane. Involved in the targeting and/or fusion of transport vesicles to their target membrane. The sequence is that of Putative vesicle-associated membrane protein 726 (VAMP726) from Arabidopsis thaliana (Mouse-ear cress).